A 637-amino-acid polypeptide reads, in one-letter code: tRNA uridine 5-carboxymethylaminomethyl modification enzyme MnmG (637 aa).

FAD contacts are provided by residues 15-20, Val-127, and Ser-182; that span reads GAGHAG. 274–288 contacts NAD(+); the sequence is GPRYCPSIEDKVVRF. Residue Gln-371 coordinates FAD.

Belongs to the MnmG family. As to quaternary structure, homodimer. Heterotetramer of two MnmE and two MnmG subunits. The cofactor is FAD.

It localises to the cytoplasm. NAD-binding protein involved in the addition of a carboxymethylaminomethyl (cmnm) group at the wobble position (U34) of certain tRNAs, forming tRNA-cmnm(5)s(2)U34. The polypeptide is tRNA uridine 5-carboxymethylaminomethyl modification enzyme MnmG (Heliobacterium modesticaldum (strain ATCC 51547 / Ice1)).